We begin with the raw amino-acid sequence, 75 residues long: Brevinin-2ISc (75 aa).

An N-terminal signal peptide occupies residues 1 to 22 (MFTLKKSLLLLFFLGTISLSLC). Positions 23–40 (EEERDADEDEGEMTEEEV) are cleaved as a propeptide — removed in mature form. Cys-69 and Cys-75 are joined by a disulfide.

As to expression, expressed by the skin glands.

It is found in the secreted. Its function is as follows. Has antimicrobial activity against Gram-negative bacterium E.coli ATCC 8739 (MIC=50 ug) and against Gram positive bacteria S.aureus ATCC 6538 (MIC=25 ug). Has no activity against methicillin-resistant S.aureus ATCC 43300, B.subtilis ATCC 6633 and against fungus C.albicans ATCC 90028. The polypeptide is Brevinin-2ISc (Odorrana ishikawae (Ishikawa's frog)).